The sequence spans 541 residues: Arginine--tRNA ligase (541 aa).

A 'HIGH' region motif is present at residues 119-129; that stretch reads ANPTGPLHIGH.

The protein belongs to the class-I aminoacyl-tRNA synthetase family. Monomer.

Its subcellular location is the cytoplasm. It catalyses the reaction tRNA(Arg) + L-arginine + ATP = L-arginyl-tRNA(Arg) + AMP + diphosphate. The chain is Arginine--tRNA ligase (argS) from Helicobacter pylori (strain J99 / ATCC 700824) (Campylobacter pylori J99).